The primary structure comprises 1161 residues: Lysine-specific demethylase 2A (1161 aa).

At serine 28 the chain carries Phosphoserine. The region spanning 148-316 is the JmjC domain; that stretch reads FSHTRLENMV…MQLKIYSIED (169 aa). Threonine 209 serves as a coordination point for substrate. Positions 212 and 214 each coordinate Fe cation. Position 229 (lysine 229) interacts with substrate. A Fe cation-binding site is contributed by histidine 284. Serine 390 and serine 394 each carry phosphoserine. Positions 419–433 are enriched in low complexity; sequence KTLSGDSSSDSTRGS. The segment at 419-445 is disordered; it reads KTLSGDSSSDSTRGSHNGQVWDPQCSP. Serine 444 carries the post-translational modification Phosphoserine. Lysine 505 participates in a covalent cross-link: Glycyl lysine isopeptide (Lys-Gly) (interchain with G-Cter in SUMO2). Residues 532–557 form a disordered region; sequence VPTIPITKPHTMKPAPRLTPVRPAAA. Threonine 550 is modified (phosphothreonine). Serine 558 is subject to Phosphoserine. A CXXC-type zinc finger spans residues 564-610; the sequence is ARRRRVRCRKCKACVQGECGVCHYCRDMKKFGGPGRMKQSCVLRQCL. Positions 571, 574, 577, 582, 585, 588, 604, 609, 620, and 623 each coordinate Zn(2+). The segment at 617–678 adopts a PHD-type zinc-finger fold; it reads SVTCSLCGEV…CWECPKCYQE (62 aa). Threonine 632 carries the phosphothreonine modification. Residues cysteine 642, cysteine 645, histidine 650, cysteine 653, cysteine 672, and cysteine 675 each contribute to the Zn(2+) site. The residue at position 692 (serine 692) is a Phosphoserine. The tract at residues 705–789 is disordered; the sequence is LRSCEEPLTP…PSGKKELSEV (85 aa). Position 713 is a phosphothreonine (threonine 713). Serine 718 and serine 731 each carry phosphoserine. 2 stretches are compositionally biased toward basic and acidic residues: residues 746 to 757 and 771 to 789; these read SDHHSASRDERF and TMVREKENNPSGKKELSEV. 3 positions are modified to phosphoserine: serine 825, serine 868, and serine 882. Positions 840 to 886 are disordered; the sequence is CPARNPQHGDEEGLGGEEEEEEEEEEDDSAEEGGAARLNGRGSWAQD. The span at 851-870 shows a compositional bias: acidic residues; the sequence is EGLGGEEEEEEEEEEDDSAE. Residues 888–935 form the F-box domain; sequence DESWMQREVWMSVFRYLSRKELCECMRVCKTWYKWCCDKRLWTKIDLS. LRR repeat units follow at residues 960 to 981 and 983 to 1009; these read WTNISKKQLTWLVNRLPGLKDL and LAGCSWSAVSALSTSSCPLLRTLDLRW. Arginine 1019 is modified (ADP-ribosylarginine). 4 LRR repeats span residues 1047–1072, 1073–1102, 1103–1127, and 1128–1155; these read GLDITDATLRLIIRHMPLLSRLDLSH, CSHLTDQSSNLLTAVGSSTRYSLTELNMAG, CNKLTDQTLFFLRRIANVTLIDLRG, and CKQITRKACEHFISDLSINSLYCLSDEK.

Belongs to the JHDM1 histone demethylase family. Part of a SCF (SKP1-cullin-F-box) protein ligase complex. Interacts with CBX5/HP1A; the interaction promotes CBX5 localization to chromatin. The SKP1-KDM2A complex interacts with UBB. Fe(2+) is required as a cofactor. In terms of processing, mono-ADP-ribosylated at Arg-1019 in response to DNA damage, leading to displacement from chromatin, resulting in increased dimethylation of histone H3 at 'Lys-36'.

It localises to the nucleus. Its subcellular location is the nucleoplasm. It is found in the chromosome. The enzyme catalyses N(6),N(6)-dimethyl-L-lysyl(36)-[histone H3] + 2 2-oxoglutarate + 2 O2 = L-lysyl(36)-[histone H3] + 2 formaldehyde + 2 succinate + 2 CO2. In terms of biological role, histone demethylase that specifically demethylates 'Lys-36' of histone H3, thereby playing a central role in histone code. Preferentially demethylates dimethylated H3 'Lys-36' residue while it has weak or no activity for mono- and tri-methylated H3 'Lys-36'. May also recognize and bind to some phosphorylated proteins and promote their ubiquitination and degradation. Required to maintain the heterochromatic state. Associates with centromeres and represses transcription of small non-coding RNAs that are encoded by the clusters of satellite repeats at the centromere. Required to sustain centromeric integrity and genomic stability, particularly during mitosis. Regulates circadian gene expression by repressing the transcriptional activator activity of CLOCK-BMAL1 heterodimer and RORA in a catalytically-independent manner. This Mus musculus (Mouse) protein is Lysine-specific demethylase 2A (Kdm2a).